Reading from the N-terminus, the 423-residue chain is Tegument protein UL43 (423 aa).

Residues 1–12 are compositionally biased toward polar residues; the sequence is MEKTPAETTAVS. The tract at residues 1–46 is disordered; sequence MEKTPAETTAVSAGNVPRDSIPCITNVSADTRGRTRPSRPATVPQR.

The protein belongs to the herpesviridae US22 family.

Its subcellular location is the virion tegument. The protein is Tegument protein UL43 (UL43) of Homo sapiens (Human).